The following is a 380-amino-acid chain: Cytochrome b (380 aa).

Helical transmembrane passes span Leu33–Met53, Trp77–Ile98, Trp113–Leu133, and Phe178–Leu198. Heme b contacts are provided by His83 and His97. Heme b contacts are provided by His182 and His196. Residue His201 participates in a ubiquinone binding. 4 consecutive transmembrane segments (helical) span residues Thr226–Ser246, Leu288–His308, Leu320–Gly340, and Phe347–Pro367.

It belongs to the cytochrome b family. The cytochrome bc1 complex contains 11 subunits: 3 respiratory subunits (MT-CYB, CYC1 and UQCRFS1), 2 core proteins (UQCRC1 and UQCRC2) and 6 low-molecular weight proteins (UQCRH/QCR6, UQCRB/QCR7, UQCRQ/QCR8, UQCR10/QCR9, UQCR11/QCR10 and a cleavage product of UQCRFS1). This cytochrome bc1 complex then forms a dimer. It depends on heme b as a cofactor.

It is found in the mitochondrion inner membrane. Component of the ubiquinol-cytochrome c reductase complex (complex III or cytochrome b-c1 complex) that is part of the mitochondrial respiratory chain. The b-c1 complex mediates electron transfer from ubiquinol to cytochrome c. Contributes to the generation of a proton gradient across the mitochondrial membrane that is then used for ATP synthesis. The polypeptide is Cytochrome b (MT-CYB) (Nomascus leucogenys (Northern white-cheeked gibbon)).